The sequence spans 83 residues: uncharacterized protein (83 aa).

A run of 2 helical transmembrane segments spans residues 23-43 and 56-76; these read FSLW…QLIK and TIFV…CVFL.

The protein localises to the cell membrane. This is an uncharacterized protein from Bacillus subtilis (strain 168).